Reading from the N-terminus, the 175-residue chain is ATP-dependent protease subunit HslV (175 aa).

Residue Thr-2 is part of the active site. 3 residues coordinate Na(+): Gly-158, Cys-161, and Thr-164.

It belongs to the peptidase T1B family. HslV subfamily. As to quaternary structure, a double ring-shaped homohexamer of HslV is capped on each side by a ring-shaped HslU homohexamer. The assembly of the HslU/HslV complex is dependent on binding of ATP.

The protein localises to the cytoplasm. The catalysed reaction is ATP-dependent cleavage of peptide bonds with broad specificity.. Allosterically activated by HslU binding. In terms of biological role, protease subunit of a proteasome-like degradation complex believed to be a general protein degrading machinery. This is ATP-dependent protease subunit HslV from Histophilus somni (strain 129Pt) (Haemophilus somnus).